A 623-amino-acid chain; its full sequence is tRNA uridine 5-carboxymethylaminomethyl modification enzyme MnmG (623 aa).

10 to 15 (GGGHAG) is a binding site for FAD. Position 269–283 (269–283 (GPRYCPSIEDKIVRF)) interacts with NAD(+).

The protein belongs to the MnmG family. In terms of assembly, homodimer. Heterotetramer of two MnmE and two MnmG subunits. FAD serves as cofactor.

It is found in the cytoplasm. Its function is as follows. NAD-binding protein involved in the addition of a carboxymethylaminomethyl (cmnm) group at the wobble position (U34) of certain tRNAs, forming tRNA-cmnm(5)s(2)U34. This Rhizobium meliloti (strain 1021) (Ensifer meliloti) protein is tRNA uridine 5-carboxymethylaminomethyl modification enzyme MnmG.